The primary structure comprises 222 residues: Probable transaldolase (222 aa).

K91 (schiff-base intermediate with substrate) is an active-site residue.

It belongs to the transaldolase family. Type 3B subfamily.

Its subcellular location is the cytoplasm. The catalysed reaction is D-sedoheptulose 7-phosphate + D-glyceraldehyde 3-phosphate = D-erythrose 4-phosphate + beta-D-fructose 6-phosphate. It participates in carbohydrate degradation; pentose phosphate pathway; D-glyceraldehyde 3-phosphate and beta-D-fructose 6-phosphate from D-ribose 5-phosphate and D-xylulose 5-phosphate (non-oxidative stage): step 2/3. Functionally, transaldolase is important for the balance of metabolites in the pentose-phosphate pathway. The sequence is that of Probable transaldolase from Chlorobium phaeovibrioides (strain DSM 265 / 1930) (Prosthecochloris vibrioformis (strain DSM 265)).